The following is a 338-amino-acid chain: Ketol-acid reductoisomerase (NADP(+)) (338 aa).

The KARI N-terminal Rossmann domain occupies 1–181; sequence MNVYYDKDCD…GGGRSGIIET (181 aa). NADP(+) is bound by residues 24–27, R47, S50, S52, and 82–85; these read YGSQ and DEFQ. H107 is an active-site residue. G133 contributes to the NADP(+) binding site. Residues 182–327 form the KARI C-terminal knotted domain; sequence TFKDETETDL…AKLRGMMPWI (146 aa). Residues D190, E194, E226, and E230 each coordinate Mg(2+). Position 251 (S251) interacts with substrate.

This sequence belongs to the ketol-acid reductoisomerase family. Mg(2+) serves as cofactor.

The enzyme catalyses (2R)-2,3-dihydroxy-3-methylbutanoate + NADP(+) = (2S)-2-acetolactate + NADPH + H(+). It catalyses the reaction (2R,3R)-2,3-dihydroxy-3-methylpentanoate + NADP(+) = (S)-2-ethyl-2-hydroxy-3-oxobutanoate + NADPH + H(+). Its pathway is amino-acid biosynthesis; L-isoleucine biosynthesis; L-isoleucine from 2-oxobutanoate: step 2/4. The protein operates within amino-acid biosynthesis; L-valine biosynthesis; L-valine from pyruvate: step 2/4. Its function is as follows. Involved in the biosynthesis of branched-chain amino acids (BCAA). Catalyzes an alkyl-migration followed by a ketol-acid reduction of (S)-2-acetolactate (S2AL) to yield (R)-2,3-dihydroxy-isovalerate. In the isomerase reaction, S2AL is rearranged via a Mg-dependent methyl migration to produce 3-hydroxy-3-methyl-2-ketobutyrate (HMKB). In the reductase reaction, this 2-ketoacid undergoes a metal-dependent reduction by NADPH to yield (R)-2,3-dihydroxy-isovalerate. The protein is Ketol-acid reductoisomerase (NADP(+)) of Psychrobacter arcticus (strain DSM 17307 / VKM B-2377 / 273-4).